A 413-amino-acid polypeptide reads, in one-letter code: uncharacterized protein (413 aa).

The N-terminal stretch at 1-20 (MRVIIVIMMVVFVVVGTSSG) is a signal peptide.

This is an uncharacterized protein from Archaeoglobus fulgidus (strain ATCC 49558 / DSM 4304 / JCM 9628 / NBRC 100126 / VC-16).